The sequence spans 206 residues: Ribosomal RNA small subunit methyltransferase G (206 aa).

Residues G73, L78, 124–125 (VE), and R139 contribute to the S-adenosyl-L-methionine site.

The protein belongs to the methyltransferase superfamily. RNA methyltransferase RsmG family.

It is found in the cytoplasm. It catalyses the reaction guanosine(527) in 16S rRNA + S-adenosyl-L-methionine = N(7)-methylguanosine(527) in 16S rRNA + S-adenosyl-L-homocysteine. Its function is as follows. Specifically methylates the N7 position of guanine in position 527 of 16S rRNA. In Serratia proteamaculans (strain 568), this protein is Ribosomal RNA small subunit methyltransferase G.